The sequence spans 68 residues: MESEQIQVNCPTCGKVVIWGEQSPFRPFCCKRCQLIDLGEWADEEKRIPSDTELSDSDEWSEEDPLKH.

Residues Cys10, Cys13, Cys29, and Cys33 each coordinate Zn(2+). The disordered stretch occupies residues 45 to 68 (EKRIPSDTELSDSDEWSEEDPLKH). The segment covering 53–68 (ELSDSDEWSEEDPLKH) has biased composition (acidic residues).

The protein belongs to the DNA gyrase inhibitor YacG family. In terms of assembly, interacts with GyrB. Zn(2+) is required as a cofactor.

Its function is as follows. Inhibits all the catalytic activities of DNA gyrase by preventing its interaction with DNA. Acts by binding directly to the C-terminal domain of GyrB, which probably disrupts DNA binding by the gyrase. This chain is DNA gyrase inhibitor YacG, found in Yersinia pseudotuberculosis serotype O:1b (strain IP 31758).